We begin with the raw amino-acid sequence, 343 residues long: Putative KilA-N domain-containing protein R904 (343 aa).

Residues 51–157 (EFSWGNYLNL…IKASVIINDY (107 aa)) enclose the KilA-N domain. The stretch at 159 to 279 (AKQMFKEHEK…NAVKEYKELY (121 aa)) forms a coiled coil.

The chain is Putative KilA-N domain-containing protein R904 from Acanthamoeba polyphaga mimivirus (APMV).